The chain runs to 250 residues: Endonuclease NucS (250 aa).

This sequence belongs to the NucS endonuclease family.

It localises to the cytoplasm. Cleaves both 3' and 5' ssDNA extremities of branched DNA structures. The chain is Endonuclease NucS from Sulfolobus acidocaldarius (strain ATCC 33909 / DSM 639 / JCM 8929 / NBRC 15157 / NCIMB 11770).